We begin with the raw amino-acid sequence, 394 residues long: Probable acetyl-CoA acyltransferase (394 aa).

C88 functions as the Acyl-thioester intermediate in the catalytic mechanism. Catalysis depends on proton acceptor residues H349 and C378.

Belongs to the thiolase-like superfamily. Thiolase family.

It is found in the cytoplasm. The enzyme catalyses 2 acetyl-CoA = acetoacetyl-CoA + CoA. The chain is Probable acetyl-CoA acyltransferase from Staphylococcus epidermidis (strain ATCC 35984 / DSM 28319 / BCRC 17069 / CCUG 31568 / BM 3577 / RP62A).